The sequence spans 582 residues: Putative G-protein coupled receptor B0244.10 (582 aa).

The next 4 helical transmembrane spans lie at 25-45, 70-90, 120-140, and 159-179; these read LYII…PLGL, ITFS…GFAV, WTFF…GLVI, and LLVQ…VFLT. N190 is a glycosylation site (N-linked (GlcNAc...) asparagine). A helical transmembrane segment spans residues 199–218; sequence LTLGKWFIALYRFLFQMTNI. 2 N-linked (GlcNAc...) asparagine glycosylation sites follow: N221 and N237. The next 5 helical transmembrane spans lie at 253–273, 296–316, 329–349, 377–397, and 421–441; these read SLMI…AVLV, YIFV…IIII, TFAF…SLLG, IYII…PFGL, and WLLF…LLFV. N-linked (GlcNAc...) asparagine glycosylation is present at N457. A run of 2 helical transmembrane segments spans residues 475–495 and 513–533; these read TILV…AAFG and LIFP…TFLL. N-linked (GlcNAc...) asparagine glycosylation occurs at N538.

It belongs to the G-protein coupled receptor 1 family. B0244 subfamily.

Its subcellular location is the cell membrane. The polypeptide is Putative G-protein coupled receptor B0244.10 (Caenorhabditis elegans).